Here is a 192-residue protein sequence, read N- to C-terminus: ER membrane protein complex subunit 8/9 homolog (192 aa).

In terms of domain architecture, MPN spans 5–135; that stretch reads ISITTEALSK…LVSIDKVGSD (131 aa).

This sequence belongs to the EMC8/EMC9 family.

The protein is ER membrane protein complex subunit 8/9 homolog of Dictyostelium discoideum (Social amoeba).